The following is a 493-amino-acid chain: Lysine--tRNA ligase (493 aa).

Residues Glu-403 and Glu-410 each coordinate Mg(2+).

The protein belongs to the class-II aminoacyl-tRNA synthetase family. In terms of assembly, homodimer. Mg(2+) is required as a cofactor.

The protein resides in the cytoplasm. The catalysed reaction is tRNA(Lys) + L-lysine + ATP = L-lysyl-tRNA(Lys) + AMP + diphosphate. The chain is Lysine--tRNA ligase from Wigglesworthia glossinidia brevipalpis.